Reading from the N-terminus, the 163-residue chain is MASTYSFDIVSDFDRQELVNAVDQARREIKQRYDLKDTQTEIELEEGSLIITTASEMALNSIRDLLLTKAAKRGLSLKIFDFQPPESAGGNRVRQVVRLKKGIDAALAKQIAKQIRDNFKKVQPSIQGDLVRVSGKDKDELQAVIQMLKQQDYPVALQFVNYR.

Belongs to the YajQ family.

Functionally, nucleotide-binding protein. The chain is Nucleotide-binding protein CYA_0935 from Synechococcus sp. (strain JA-3-3Ab) (Cyanobacteria bacterium Yellowstone A-Prime).